Consider the following 506-residue polypeptide: Histidine ammonia-lyase (506 aa).

Residues 143–145 (ASG) constitute a cross-link (5-imidazolinone (Ala-Gly)). A 2,3-didehydroalanine (Ser) modification is found at serine 144.

Belongs to the PAL/histidase family. Post-translationally, contains an active site 4-methylidene-imidazol-5-one (MIO), which is formed autocatalytically by cyclization and dehydration of residues Ala-Ser-Gly.

The protein resides in the cytoplasm. The catalysed reaction is L-histidine = trans-urocanate + NH4(+). It participates in amino-acid degradation; L-histidine degradation into L-glutamate; N-formimidoyl-L-glutamate from L-histidine: step 1/3. This Salmonella typhi protein is Histidine ammonia-lyase.